The sequence spans 318 residues: Acetaldehyde dehydrogenase 1 (318 aa).

An NAD(+)-binding site is contributed by 15 to 18 (SGNI). Residue C133 is the Acyl-thioester intermediate of the active site. Residues 164 to 172 (SAGPGTRAN) and N289 each bind NAD(+).

It belongs to the acetaldehyde dehydrogenase family.

It carries out the reaction acetaldehyde + NAD(+) + CoA = acetyl-CoA + NADH + H(+). The sequence is that of Acetaldehyde dehydrogenase 1 (xylQ) from Azotobacter vinelandii (strain DJ / ATCC BAA-1303).